Reading from the N-terminus, the 556-residue chain is Polypeptide N-acetylgalactosaminyltransferase 13 (556 aa).

Topologically, residues 1 to 4 are cytoplasmic; it reads MRRL. Residues 5-27 form a helical; Signal-anchor for type II membrane protein membrane-spanning segment; that stretch reads VYCKVVLATSLMWVLVDVFLLLY. At 28–556 the chain is on the lumenal side; that stretch reads FSECNKCDDK…WLLRNMTLGT (529 aa). N-linked (GlcNAc...) asparagine glycans are attached at residues Asn94 and Asn116. Cystine bridges form between Cys105–Cys338, Cys329–Cys407, Cys441–Cys458, Cys481–Cys496, and Cys522–Cys539. The catalytic subdomain A stretch occupies residues 114 to 224; the sequence is LPNTSVVIVF…LGWLEPLLAR (111 aa). The substrate site is built by Asp155 and Arg185. Positions 208 and 210 each coordinate Mn(2+). Residues 284-346 form a catalytic subdomain B region; that stretch reads PVRTPTMAGG…TCSHVGHVFR (63 aa). Trp315 is a binding site for substrate. Mn(2+) is bound at residue His343. The substrate site is built by Arg346 and Tyr351. Residues 428–550 form the Ricin B-type lectin domain; the sequence is YSLGEIRNVE…GSRSQQWLLR (123 aa). Residue Asn551 is glycosylated (N-linked (GlcNAc...) asparagine).

It belongs to the glycosyltransferase 2 family. GalNAc-T subfamily. Requires Mn(2+) as cofactor.

It is found in the golgi apparatus membrane. The catalysed reaction is L-seryl-[protein] + UDP-N-acetyl-alpha-D-galactosamine = a 3-O-[N-acetyl-alpha-D-galactosaminyl]-L-seryl-[protein] + UDP + H(+). It carries out the reaction L-threonyl-[protein] + UDP-N-acetyl-alpha-D-galactosamine = a 3-O-[N-acetyl-alpha-D-galactosaminyl]-L-threonyl-[protein] + UDP + H(+). It participates in protein modification; protein glycosylation. Its function is as follows. Catalyzes the initial reaction in O-linked oligosaccharide biosynthesis, the transfer of an N-acetyl-D-galactosamine (GalNAc) residue from UDP-GalNAc to a serine or threonine residue on the protein receptor. Generates GalNAc-O-Ser/Thr structure also known as Tn antigen, which itself is immunogenic but also serves as a precursor for the synthesis of different mucin-type O-glycan core structures. Contributes to the synthesis of O-linked glycans on mucins and proteoglycans of the central nervous system. Can glycosylate both unmodified peptides and glycopeptides that already contain an O-linked GalNAc sugar. Transfers GalNAc to Thr-/Ser-rich tandem repeats GTTPSPVPTTSTTSAP of MUC5AC. Transfers GalNAc to three consecutive serine/threonine residues on SDC3 forming a triplet-Tn epitope expressed in Purkinje cells of the developing brain. May promote neurogenesis through glycosylation and stabilization of PDPN. In Rattus norvegicus (Rat), this protein is Polypeptide N-acetylgalactosaminyltransferase 13 (Galnt13).